The primary structure comprises 344 residues: tRNA N6-adenosine threonylcarbamoyltransferase (344 aa).

Fe cation contacts are provided by His-111 and His-115. Residues 136-140 (LVSGG), Asp-169, Gly-182, and Asn-279 each bind substrate. Asp-307 provides a ligand contact to Fe cation.

The protein belongs to the KAE1 / TsaD family. Fe(2+) is required as a cofactor.

The protein localises to the cytoplasm. The enzyme catalyses L-threonylcarbamoyladenylate + adenosine(37) in tRNA = N(6)-L-threonylcarbamoyladenosine(37) in tRNA + AMP + H(+). In terms of biological role, required for the formation of a threonylcarbamoyl group on adenosine at position 37 (t(6)A37) in tRNAs that read codons beginning with adenine. Is involved in the transfer of the threonylcarbamoyl moiety of threonylcarbamoyl-AMP (TC-AMP) to the N6 group of A37, together with TsaE and TsaB. TsaD likely plays a direct catalytic role in this reaction. This chain is tRNA N6-adenosine threonylcarbamoyltransferase, found in Mannheimia succiniciproducens (strain KCTC 0769BP / MBEL55E).